The primary structure comprises 62 residues: MRCLPVFVILLLLIASTPSVDALQKTKDDMPLASFHDNVKRILQTLSNKRSCCPTILSCCFV.

An N-terminal signal peptide occupies residues M1–A22. A propeptide spanning residues L23–N48 is cleaved from the precursor.

This sequence belongs to the conotoxin T superfamily. Post-translationally, contains 2 disulfide bonds that can be either 'C1-C3, C2-C4' or 'C1-C4, C2-C3', since these disulfide connectivities have been observed for conotoxins with cysteine framework V (for examples, see AC P0DQQ7 and AC P81755). In terms of tissue distribution, expressed by the venom duct.

The protein resides in the secreted. The polypeptide is Conotoxin Pn-B0151 (Conus pennaceus (Feathered cone)).